The following is a 265-amino-acid chain: 4-hydroxy-tetrahydrodipicolinate reductase (265 aa).

Residues 7–12 (GASGRM) and aspartate 33 contribute to the NAD(+) site. Residue arginine 34 coordinates NADP(+). Residues 96–98 (GTT) and 120–123 (AANM) contribute to the NAD(+) site. The active-site Proton donor/acceptor is the histidine 153. Histidine 154 serves as a coordination point for (S)-2,3,4,5-tetrahydrodipicolinate. Lysine 157 acts as the Proton donor in catalysis. (S)-2,3,4,5-tetrahydrodipicolinate is bound at residue 163 to 164 (GT).

Belongs to the DapB family.

The protein resides in the cytoplasm. It catalyses the reaction (S)-2,3,4,5-tetrahydrodipicolinate + NAD(+) + H2O = (2S,4S)-4-hydroxy-2,3,4,5-tetrahydrodipicolinate + NADH + H(+). It carries out the reaction (S)-2,3,4,5-tetrahydrodipicolinate + NADP(+) + H2O = (2S,4S)-4-hydroxy-2,3,4,5-tetrahydrodipicolinate + NADPH + H(+). It functions in the pathway amino-acid biosynthesis; L-lysine biosynthesis via DAP pathway; (S)-tetrahydrodipicolinate from L-aspartate: step 4/4. Its function is as follows. Catalyzes the conversion of 4-hydroxy-tetrahydrodipicolinate (HTPA) to tetrahydrodipicolinate. The sequence is that of 4-hydroxy-tetrahydrodipicolinate reductase from Burkholderia orbicola (strain AU 1054).